We begin with the raw amino-acid sequence, 284 residues long: Peflin (284 aa).

A disordered region spans residues 1 to 111 (MASYPYRQGC…QPGLYGQGGA (111 aa)). The segment covering 8–26 (QGCPGAAGQAPGAPPGSYY) has biased composition (low complexity). Repeat copies occupy residues 21 to 29 (PPGSYYPGP), 31 to 39 (NSGGQYGSG), 41 to 49 (PPGGGYGGP), 50 to 58 (APGGPYGPP), 59 to 67 (AGGGPYGHP), 76 to 84 (TPGGPYGGA), 85 to 92 (APGGPYGQ), 93 to 100 (PPPSSYGA), and 101 to 109 (QQPGLYGQG). Positions 21-109 (PPGSYYPGPP…AQQPGLYGQG (89 aa)) are 9 X 9 AA approximate tandem repeat of [AP]-P-G-G-P-Y-G-G-P-P. A compositionally biased stretch (gly residues) spans 34–50 (GQYGSGLPPGGGYGGPA). Over residues 65 to 75 (GHPNPGMFPSG) the composition is skewed to low complexity. Residues 76–90 (TPGGPYGGAAPGGPY) show a composition bias toward gly residues. 5 consecutive EF-hand domains span residues 114–149 (NVDP…CNWS), 155–183 (TCLM…WKFI), 181–216 (KFIQ…MGYN), 217–253 (LSPQ…LQVL), and 254–283 (TEAF…ASRM). Residues Asp-127, Asp-129, Ser-131, and Tyr-133 each coordinate Ca(2+). Lys-137 is covalently cross-linked (Glycyl lysine isopeptide (Lys-Gly) (interchain with G-Cter in ubiquitin)). Glu-138 contributes to the Ca(2+) binding site. Ca(2+) contacts are provided by Asp-194, Asp-196, Ser-198, Ser-200, and Glu-205. A required for interaction with PDCD6 region spans residues 204–284 (TELQQALSQM…FVTMTASRML (81 aa)).

In terms of assembly, heterodimer; heterodimerizes (via the EF-hand 5) with PDCD6. Dissociates from PDCD6 in presence of calcium. Ubiquitinated by the BCR(KLHL12) E3 ubiquitin ligase complex.

It is found in the cytoplasm. It localises to the endoplasmic reticulum. Its subcellular location is the membrane. The protein resides in the cytoplasmic vesicle. The protein localises to the COPII-coated vesicle membrane. Functionally, calcium-binding protein that acts as an adapter that bridges unrelated proteins or stabilizes weak protein-protein complexes in response to calcium. Together with PDCD6, acts as a calcium-dependent adapter for the BCR(KLHL12) complex, a complex involved in endoplasmic reticulum (ER)-Golgi transport by regulating the size of COPII coats. In response to cytosolic calcium increase, the heterodimer formed with PDCD6 interacts with, and bridges together the BCR(KLHL12) complex and SEC31 (SEC31A or SEC31B), promoting monoubiquitination of SEC31 and subsequent collagen export, which is required for neural crest specification. Its role in the heterodimer formed with PDCD6 is however unclear: some evidence shows that PEF1 and PDCD6 work together and promote association between PDCD6 and SEC31 in presence of calcium. Other reports show that PEF1 dissociates from PDCD6 in presence of calcium, and may act as a negative regulator of PDCD6. Also acts as a negative regulator of ER-Golgi transport; possibly by inhibiting interaction between PDCD6 and SEC31. The chain is Peflin from Homo sapiens (Human).